Reading from the N-terminus, the 419-residue chain is Tryptophan synthase beta chain (419 aa).

Lys113 carries the N6-(pyridoxal phosphate)lysine modification.

It belongs to the TrpB family. As to quaternary structure, tetramer of two alpha and two beta chains. The cofactor is pyridoxal 5'-phosphate.

The enzyme catalyses (1S,2R)-1-C-(indol-3-yl)glycerol 3-phosphate + L-serine = D-glyceraldehyde 3-phosphate + L-tryptophan + H2O. The protein operates within amino-acid biosynthesis; L-tryptophan biosynthesis; L-tryptophan from chorismate: step 5/5. The beta subunit is responsible for the synthesis of L-tryptophan from indole and L-serine. This is Tryptophan synthase beta chain from Picrophilus torridus (strain ATCC 700027 / DSM 9790 / JCM 10055 / NBRC 100828 / KAW 2/3).